The sequence spans 317 residues: Cytochrome c biogenesis protein CcsA (317 aa).

8 helical membrane passes run 17-37 (VVSIVITIHLINLLVNEIVGL), 44-64 (GMIVTLFCITGFLIIRWIYSG), 71-91 (LYESLIFLSWNFSIINMLPYL), 101-121 (ITSPSTLFIQGFATSGLLTQI), 143-163 (MILSYASLLCGSLLSIALLVI), 223-243 (IISIGFLFLTIGILSGAVWAN), 252-272 (WDPKETWAFITWTIFAIYLHI), and 284-304 (AIVASIGFLIIWICYFGINIL).

It belongs to the CcmF/CycK/Ccl1/NrfE/CcsA family. In terms of assembly, may interact with Ccs1.

It localises to the plastid. The protein localises to the chloroplast thylakoid membrane. Its function is as follows. Required during biogenesis of c-type cytochromes (cytochrome c6 and cytochrome f) at the step of heme attachment. This Pelargonium hortorum (Common geranium) protein is Cytochrome c biogenesis protein CcsA.